Reading from the N-terminus, the 377-residue chain is MEEFDYISEFPDCLLTQILLNLPTKDSVKTSVLSKRWRNLWLNVPGLRLRTFDFPVFPYPYEEGFVRFMDRFMEFKCRSRLQKFMITYFEHNGYRDRLMELIGTLVDRGIQHLYVYMHTCNRVDFIRQNIYKSKTLVSLKLYNVELKNPEFVVSLPCLKILKLENIFHGEDGPLVVEKLISGCPVLEDLELIRPFDDNVGYGSLTAPKYSRNRDIIGDFLTVISSVRHTIICYSTSKMLYSYSKQLGPIPQFHNLYHLQARFSSSSLQLLPTFLESCPACPNLKNLIMEFPFEPKNIDFHKVPQCLISTLEYVQIEELILKEKSGIKLVDYFLENSAVLKKLTLSFTYHSKKKQDPESYKKLLTSTKLSPTCQIIID.

One can recognise an F-box domain in the interval 4–50; that stretch reads FDYISEFPDCLLTQILLNLPTKDSVKTSVLSKRWRNLWLNVPGLRLR. The FBD domain occupies 297-346; it reads IDFHKVPQCLISTLEYVQIEELILKEKSGIKLVDYFLENSAVLKKLTLSF.

The sequence is that of Putative FBD-associated F-box protein At5g44940 from Arabidopsis thaliana (Mouse-ear cress).